We begin with the raw amino-acid sequence, 260 residues long: 3'-5' ssDNA/RNA exonuclease TatD (260 aa).

Residues Glu-91, His-127, and His-152 each contribute to the a divalent metal cation site.

Belongs to the metallo-dependent hydrolases superfamily. TatD-type hydrolase family. TatD subfamily. In terms of assembly, monomer. Mg(2+) serves as cofactor.

It localises to the cytoplasm. Its function is as follows. 3'-5' exonuclease that prefers single-stranded DNA and RNA. May play a role in the H(2)O(2)-induced DNA damage repair. The sequence is that of 3'-5' ssDNA/RNA exonuclease TatD from Escherichia fergusonii (strain ATCC 35469 / DSM 13698 / CCUG 18766 / IAM 14443 / JCM 21226 / LMG 7866 / NBRC 102419 / NCTC 12128 / CDC 0568-73).